The chain runs to 183 residues: Ribosome-recycling factor (183 aa).

This sequence belongs to the RRF family.

The protein localises to the cytoplasm. Responsible for the release of ribosomes from messenger RNA at the termination of protein biosynthesis. May increase the efficiency of translation by recycling ribosomes from one round of translation to another. The chain is Ribosome-recycling factor from Deinococcus radiodurans (strain ATCC 13939 / DSM 20539 / JCM 16871 / CCUG 27074 / LMG 4051 / NBRC 15346 / NCIMB 9279 / VKM B-1422 / R1).